The sequence spans 107 residues: MMKVLVVVALLVTLISYSSGEGIDDLEADELLSLMANEQTRKECIPKHHECTSNKHGCCRGNFFKYKCQCTTVVTQDGEQTERCFCGTPPHHKAAELVVGFGKKIFG.

Positions methionine 1–glycine 20 are cleaved as a signal peptide. Residues glutamate 21–arginine 41 constitute a propeptide that is removed on maturation. Intrachain disulfides connect cysteine 44/cysteine 59, cysteine 51/cysteine 68, cysteine 58/cysteine 86, and cysteine 70/cysteine 84.

Belongs to the neurotoxin 19 (CSTX) family. 04 (U1-Lctx) subfamily. Expressed by the venom gland.

The protein resides in the secreted. The protein is U1-lycotoxin-Ls1b of Lycosa singoriensis (Wolf spider).